The chain runs to 844 residues: Aminopeptidase N (844 aa).

Substrate contacts are provided by residues glutamate 120 and 253–257 (GAMEN). Residue histidine 289 coordinates Zn(2+). The Proton acceptor role is filled by glutamate 290. Residues histidine 293 and glutamate 312 each coordinate Zn(2+).

The protein belongs to the peptidase M1 family. As to quaternary structure, monomer. The cofactor is Zn(2+).

The protein resides in the cytoplasm. It carries out the reaction Release of an N-terminal amino acid, Xaa-|-Yaa- from a peptide, amide or arylamide. Xaa is preferably Ala, but may be most amino acids including Pro (slow action). When a terminal hydrophobic residue is followed by a prolyl residue, the two may be released as an intact Xaa-Pro dipeptide.. Aminopeptidase N is involved in the degradation of intracellular peptides generated by protein breakdown during normal growth as well as in response to nutrient starvation. In Lactobacillus helveticus (Lactobacillus suntoryeus), this protein is Aminopeptidase N (pepN).